We begin with the raw amino-acid sequence, 704 residues long: Elongation factor G (704 aa).

Positions 8–290 (ARYRNIGISA…AVIEYLPAPT (283 aa)) constitute a tr-type G domain. Residues 17–24 (AHIDAGKT), 88–92 (DTPGH), and 142–145 (NKMD) each bind GTP.

It belongs to the TRAFAC class translation factor GTPase superfamily. Classic translation factor GTPase family. EF-G/EF-2 subfamily.

It localises to the cytoplasm. In terms of biological role, catalyzes the GTP-dependent ribosomal translocation step during translation elongation. During this step, the ribosome changes from the pre-translocational (PRE) to the post-translocational (POST) state as the newly formed A-site-bound peptidyl-tRNA and P-site-bound deacylated tRNA move to the P and E sites, respectively. Catalyzes the coordinated movement of the two tRNA molecules, the mRNA and conformational changes in the ribosome. This is Elongation factor G from Proteus mirabilis (strain HI4320).